Here is a 378-residue protein sequence, read N- to C-terminus: Ferredoxin--NADP reductase, root isozyme 1, chloroplastic (378 aa).

The N-terminal 65 residues, 1–65 (MALSTTPSQM…KRSTICMSLQ (65 aa)), are a transit peptide targeting the chloroplast. The FAD-binding FR-type domain occupies 93–221 (KEPYTATIVS…TGPSGKVMLL (129 aa)). C196 and C201 are disulfide-bonded. S197 carries the post-translational modification Phosphoserine. A Phosphothreonine modification is found at T229. 231-249 (IMIATGTGVAPYRGYLRRM) is a binding site for NADP(+). Residues 349–373 (LKRVAEERGESWEQKLTQLRKNKQW) adopt a coiled-coil conformation.

The protein belongs to the ferredoxin--NADP reductase type 1 family. It depends on FAD as a cofactor. Expressed in shoots and roots. Less abundant in roots than RFNR2.

The protein resides in the plastid. Its subcellular location is the chloroplast. It catalyses the reaction 2 reduced [2Fe-2S]-[ferredoxin] + NADP(+) + H(+) = 2 oxidized [2Fe-2S]-[ferredoxin] + NADPH. In terms of biological role, maintains the supply of reduced ferredoxin under non-photosynthetic conditions. This chain is Ferredoxin--NADP reductase, root isozyme 1, chloroplastic (RFNR1), found in Arabidopsis thaliana (Mouse-ear cress).